The primary structure comprises 345 residues: Phosphoribosylformylglycinamidine cyclo-ligase (345 aa).

This sequence belongs to the AIR synthase family.

The protein resides in the cytoplasm. It catalyses the reaction 2-formamido-N(1)-(5-O-phospho-beta-D-ribosyl)acetamidine + ATP = 5-amino-1-(5-phospho-beta-D-ribosyl)imidazole + ADP + phosphate + H(+). It functions in the pathway purine metabolism; IMP biosynthesis via de novo pathway; 5-amino-1-(5-phospho-D-ribosyl)imidazole from N(2)-formyl-N(1)-(5-phospho-D-ribosyl)glycinamide: step 2/2. The polypeptide is Phosphoribosylformylglycinamidine cyclo-ligase (Chromobacterium violaceum (strain ATCC 12472 / DSM 30191 / JCM 1249 / CCUG 213 / NBRC 12614 / NCIMB 9131 / NCTC 9757 / MK)).